Consider the following 338-residue polypeptide: Lipoate-protein ligase A (338 aa).

The BPL/LPL catalytic domain maps to 29–216 (PATQRVLFLW…AFFAHYGERI (188 aa)). Residues R71, 76–79 (GAVF), and K134 each bind ATP. (R)-lipoate is bound at residue K134.

It belongs to the LplA family. In terms of assembly, monomer.

The protein localises to the cytoplasm. The enzyme catalyses L-lysyl-[lipoyl-carrier protein] + (R)-lipoate + ATP = N(6)-[(R)-lipoyl]-L-lysyl-[lipoyl-carrier protein] + AMP + diphosphate + H(+). The protein operates within protein modification; protein lipoylation via exogenous pathway; protein N(6)-(lipoyl)lysine from lipoate: step 1/2. It participates in protein modification; protein lipoylation via exogenous pathway; protein N(6)-(lipoyl)lysine from lipoate: step 2/2. Functionally, catalyzes both the ATP-dependent activation of exogenously supplied lipoate to lipoyl-AMP and the transfer of the activated lipoyl onto the lipoyl domains of lipoate-dependent enzymes. The polypeptide is Lipoate-protein ligase A (Salmonella typhi).